The chain runs to 31 residues: uncharacterized protein (31 aa).

This is an uncharacterized protein from Saccharomyces cerevisiae (strain ATCC 204508 / S288c) (Baker's yeast).